A 456-amino-acid polypeptide reads, in one-letter code: Exodeoxyribonuclease 7 large subunit (456 aa).

The protein belongs to the XseA family. In terms of assembly, heterooligomer composed of large and small subunits.

The protein resides in the cytoplasm. The enzyme catalyses Exonucleolytic cleavage in either 5'- to 3'- or 3'- to 5'-direction to yield nucleoside 5'-phosphates.. Functionally, bidirectionally degrades single-stranded DNA into large acid-insoluble oligonucleotides, which are then degraded further into small acid-soluble oligonucleotides. This chain is Exodeoxyribonuclease 7 large subunit, found in Shigella flexneri serotype 5b (strain 8401).